We begin with the raw amino-acid sequence, 193 residues long: Oocyte-secreted protein 3 (193 aa).

Positions 1–22 are cleaved as a signal peptide; that stretch reads MKDFVRLQSSFLLCTILTLSEQ. N-linked (GlcNAc...) asparagine glycosylation is found at N64, N130, N148, N151, N165, and N178.

Belongs to the PLAC1 family.

The protein resides in the secreted. This is Oocyte-secreted protein 3 from Homo sapiens (Human).